Reading from the N-terminus, the 118-residue chain is MKRNWDLIRSILLKLESQSEARGSLLPDGFTGFDSETVSYHFKLLQSAGLIEAIDYSSLNEMSLIARLLTWQGHELLDKIRNDTVWNSLKTTIKSKSLDLSLDAIKQVAQTIISQMLA.

This is an uncharacterized protein from Haemophilus influenzae (strain ATCC 51907 / DSM 11121 / KW20 / Rd).